The sequence spans 257 residues: 1-(5-phosphoribosyl)-5-[(5-phosphoribosylamino)methylideneamino] imidazole-4-carboxamide isomerase (257 aa).

D8 functions as the Proton acceptor in the catalytic mechanism. The active-site Proton donor is D129.

This sequence belongs to the HisA/HisF family.

The protein resides in the cytoplasm. The catalysed reaction is 1-(5-phospho-beta-D-ribosyl)-5-[(5-phospho-beta-D-ribosylamino)methylideneamino]imidazole-4-carboxamide = 5-[(5-phospho-1-deoxy-D-ribulos-1-ylimino)methylamino]-1-(5-phospho-beta-D-ribosyl)imidazole-4-carboxamide. It functions in the pathway amino-acid biosynthesis; L-histidine biosynthesis; L-histidine from 5-phospho-alpha-D-ribose 1-diphosphate: step 4/9. This Crocosphaera subtropica (strain ATCC 51142 / BH68) (Cyanothece sp. (strain ATCC 51142)) protein is 1-(5-phosphoribosyl)-5-[(5-phosphoribosylamino)methylideneamino] imidazole-4-carboxamide isomerase.